The following is a 219-amino-acid chain: Small ribosomal subunit protein uS3 (219 aa).

Positions 38 to 107 (IREYIENKMK…RVHINVVEVK (70 aa)) constitute a KH type-2 domain.

This sequence belongs to the universal ribosomal protein uS3 family. Part of the 30S ribosomal subunit. Forms a tight complex with proteins S10 and S14.

In terms of biological role, binds the lower part of the 30S subunit head. Binds mRNA in the 70S ribosome, positioning it for translation. The protein is Small ribosomal subunit protein uS3 of Exiguobacterium sp. (strain ATCC BAA-1283 / AT1b).